The primary structure comprises 454 residues: Bifunctional protein GlmU (454 aa).

The interval 1-231 (MDRATVSLIV…EAETLGVNTR (231 aa)) is pyrophosphorylase. UDP-N-acetyl-alpha-D-glucosamine contacts are provided by residues 11 to 14 (LAAG), Lys-25, Gln-78, 83 to 84 (GT), 106 to 108 (YGD), Gly-143, Glu-157, Asn-172, and Asn-229. Asp-108 is a binding site for Mg(2+). Asn-229 serves as a coordination point for Mg(2+). Positions 232-252 (AQLAEAEAEFQKRARAAALED) are linker. Residues 253-454 (GVTLTAPDTV…AKAAKKKEAP (202 aa)) form an N-acetyltransferase region. UDP-N-acetyl-alpha-D-glucosamine contacts are provided by Arg-318 and Lys-336. His-348 functions as the Proton acceptor in the catalytic mechanism. Positions 351 and 362 each coordinate UDP-N-acetyl-alpha-D-glucosamine. Acetyl-CoA is bound by residues Ala-365, 371–372 (NY), Ser-390, Ser-408, and Arg-425.

It in the N-terminal section; belongs to the N-acetylglucosamine-1-phosphate uridyltransferase family. In the C-terminal section; belongs to the transferase hexapeptide repeat family. In terms of assembly, homotrimer. Mg(2+) serves as cofactor.

The protein localises to the cytoplasm. It catalyses the reaction alpha-D-glucosamine 1-phosphate + acetyl-CoA = N-acetyl-alpha-D-glucosamine 1-phosphate + CoA + H(+). The enzyme catalyses N-acetyl-alpha-D-glucosamine 1-phosphate + UTP + H(+) = UDP-N-acetyl-alpha-D-glucosamine + diphosphate. The protein operates within nucleotide-sugar biosynthesis; UDP-N-acetyl-alpha-D-glucosamine biosynthesis; N-acetyl-alpha-D-glucosamine 1-phosphate from alpha-D-glucosamine 6-phosphate (route II): step 2/2. It participates in nucleotide-sugar biosynthesis; UDP-N-acetyl-alpha-D-glucosamine biosynthesis; UDP-N-acetyl-alpha-D-glucosamine from N-acetyl-alpha-D-glucosamine 1-phosphate: step 1/1. It functions in the pathway bacterial outer membrane biogenesis; LPS lipid A biosynthesis. Its function is as follows. Catalyzes the last two sequential reactions in the de novo biosynthetic pathway for UDP-N-acetylglucosamine (UDP-GlcNAc). The C-terminal domain catalyzes the transfer of acetyl group from acetyl coenzyme A to glucosamine-1-phosphate (GlcN-1-P) to produce N-acetylglucosamine-1-phosphate (GlcNAc-1-P), which is converted into UDP-GlcNAc by the transfer of uridine 5-monophosphate (from uridine 5-triphosphate), a reaction catalyzed by the N-terminal domain. The protein is Bifunctional protein GlmU of Cereibacter sphaeroides (strain ATCC 17023 / DSM 158 / JCM 6121 / CCUG 31486 / LMG 2827 / NBRC 12203 / NCIMB 8253 / ATH 2.4.1.) (Rhodobacter sphaeroides).